A 312-amino-acid chain; its full sequence is Bifunctional pinoresinol-lariciresinol reductase 2 (312 aa).

NADP(+) contacts are provided by residues 11 to 17 (GGTGYIG), Arg36, and Lys45. The Proton acceptor role is filled by Lys138. An NADP(+)-binding site is contributed by Arg142. His270 contributes to the substrate binding site.

Belongs to the NmrA-type oxidoreductase family. Isoflavone reductase subfamily. Dimer.

It carries out the reaction (+)-lariciresinol + NADP(+) = (+)-pinoresinol + NADPH + H(+). The enzyme catalyses (-)-secoisolariciresinol + NADP(+) = (+)-lariciresinol + NADPH + H(+). The catalysed reaction is (-)-lariciresinol + NADP(+) = (-)-pinoresinol + NADPH + H(+). Reductase involved in lignan biosynthesis. Catalyzes the enantioselective sequential conversion of (+)-pinoresinol into (+)-lariciresinol and of (+)-lariciresinol into (-)-secoisolariciresinol. Can also convert with a lower efficiency (-)-pinoresinol into (-)-lariciresinol, but not (-)-lariciresinol into (+)-secoisolariciresinol. Abstracts the 4R-hydride from the NADPH cofactor during catalysis. The polypeptide is Bifunctional pinoresinol-lariciresinol reductase 2 (PLR_Tp2) (Thuja plicata (Western red-cedar)).